The chain runs to 484 residues: Calcium-dependent protein kinase 31 (484 aa).

The N-myristoyl glycine moiety is linked to residue glycine 2. The region spanning 28 to 290 (YILGDELGQG…AAEVLGHPWM (263 aa)) is the Protein kinase domain. Residues 34-42 (LGQGQFGIT) and lysine 57 contribute to the ATP site. Aspartate 156 functions as the Proton acceptor in the catalytic mechanism. Phosphoserine is present on serine 196. The segment at 295–325 (ASDKPIDGVVLSRLKQFRDMNKLKKVALKVI) is autoinhibitory domain. EF-hand domains follow at residues 332–367 (EEIK…LGSN), 368–403 (LSKT…RYRL), 404–439 (DRDD…HGVG), and 444–474 (IKQI…GSSL). Ca(2+)-binding residues include aspartate 345, aspartate 347, serine 349, threonine 351, glutamate 356, aspartate 381, aspartate 383, asparagine 385, threonine 387, glutamate 392, aspartate 417, aspartate 419, aspartate 421, histidine 423, glutamate 428, aspartate 452, aspartate 454, aspartate 456, lysine 458, and glutamate 463.

This sequence belongs to the protein kinase superfamily. Ser/Thr protein kinase family. CDPK subfamily.

It is found in the membrane. It catalyses the reaction L-seryl-[protein] + ATP = O-phospho-L-seryl-[protein] + ADP + H(+). It carries out the reaction L-threonyl-[protein] + ATP = O-phospho-L-threonyl-[protein] + ADP + H(+). Activated by calcium. Autophosphorylation may play an important role in the regulation of the kinase activity. Functionally, may play a role in signal transduction pathways that involve calcium as a second messenger. This is Calcium-dependent protein kinase 31 (CPK31) from Arabidopsis thaliana (Mouse-ear cress).